We begin with the raw amino-acid sequence, 120 residues long: Accessory gland protein Acp53Ea (120 aa).

The N-terminal stretch at 1-23 (MKLIKVTLVFSLLALVFVAQTEA) is a signal peptide.

Main cells of accessory gland and seminal fluid.

It is found in the secreted. In terms of biological role, responsible for physiological and behavioral changes in mated female flies. This chain is Accessory gland protein Acp53Ea (Acp53Ea), found in Drosophila melanogaster (Fruit fly).